The primary structure comprises 201 residues: Dynactin subunit 6 (201 aa).

It belongs to the dynactin subunits 5/6 family. Dynactin subunit 6 subfamily. In terms of assembly, member of the pointed-end complex of the dynactin shoulder complex which contains dctn4, dctn5 and dctn6 subunits and Actr10. Within the complex dctn6 forms a heterodimer with dctn5. Interacts with plk1.

Its subcellular location is the cytoplasm. It is found in the cytoskeleton. It localises to the chromosome. The protein resides in the centromere. The protein localises to the kinetochore. Functionally, part of the dynactin complex that activates the molecular motor dynein for ultra-processive transport along microtubules. The polypeptide is Dynactin subunit 6 (dctn6) (Xenopus tropicalis (Western clawed frog)).